The primary structure comprises 567 residues: TNF receptor-associated factor 3 (567 aa).

The tract at residues 1-26 (MESSKKMDAAGTLQPNPPLKLQPDRG) is disordered. Residue C55 forms a Glycyl cysteine thioester (Cys-Gly) (interchain with G-Cter in ubiquitin) linkage. The RING-type zinc finger occupies 67 to 76 (CGHRFCESCM). Residue K106 forms a Glycyl lysine isopeptide (Lys-Gly) (interchain with G-Cter in ubiquitin) linkage. Residue C123 forms a Glycyl cysteine thioester (Cys-Gly) (interchain with G-Cter in ubiquitin) linkage. 2 consecutive TRAF-type zinc fingers follow at residues 134–189 (VHLK…IKLQ) and 190–248 (KHED…QQIK). Residues K155 and K167 each participate in a glycyl lysine isopeptide (Lys-Gly) (interchain with G-Cter in ubiquitin) cross-link. A coiled-coil region spans residues 266–337 (SNSLEKKVSL…KLKELDKEIR (72 aa)). K328 is covalently cross-linked (Glycyl lysine isopeptide (Lys-Gly) (interchain with G-Cter in ubiquitin)). An MATH domain is found at 414-559 (NGVLIWKIRD…DDTIFIKVIV (146 aa)).

Belongs to the TNF receptor-associated factor family. A subfamily. As to quaternary structure, homotrimer. Heterotrimer with TRAF2 and TRAF5. Interacts with LTBR/TNFRSF3, TNFRSF4, TNFRSF5/CD40, TNFRSF8/CD30, TNFRSF13C TNFRSF17/BCMA, TLR4 and EDAR. Interacts with MAP3K5, MAP3K14, TRAIP/TRIP, TDP2/TTRAP, TANK/ITRAF and TRAF3IP1. Interaction with TNFRSF5/CD40 is modulated by TANK/ITRAF, which competes for the same binding site. Interacts with TICAM1. Interacts with TRAFD1. Interacts with OTUB1, OTUB2 and OTUD5. Interacts with RNF216, OPTN and TBK1. Identified in a complex with TRAF2, MAP3K14 and BIRC3. Upon exposure to bacterial lipopolysaccharide (LPS), recruited to a transient complex containing TLR4, TRAF3, TRAF6, IKBKG, MAP3K7, MYD88, TICAM1, BIRC2, BIRC3 and UBE2N. Interacts (via RING-type zinc finger domain) with SRC. Interacts with CARD14. Interacts (via MATH domain) with PTPN22; the interaction promotes TRAF3 polyubiquitination. Interacts with MAVS. Directly interacts with DDX3X; this interaction stimulates TRAF3 'Lys-63' ubiquitination. Interacts with IRF3. Interacts with IKBKE in the course of viral infection. Interacts with TRIM35. Interacts with GAPDH; promoting TRAF3 ubiquitination. Interacts with PPP3CA and PPP3CB. Interacts with RALGDS. Interacts with FBXO11. Undergoes 'Lys-48'-linked polyubiquitination, leading to its proteasomal degradation in response to signaling by TNFSF13B, TLR4 or through CD40. 'Lys-48'-linked polyubiquitinated form is deubiquitinated by OTUD7B, preventing TRAF3 proteolysis and over-activation of non-canonical NF-kappa-B. Undergoes 'Lys-63'-linked ubiquitination during early stages of virus infection, and 'Lys-48'-linked ubiquitination during later stages. Undergoes both 'Lys-48'-linked and 'Lys-63'-linked ubiquitination in response to TLR3 and TLR4 signaling. 'Lys-63'-linked ubiquitination can be mediated by TRIM35. Deubiquitinated by OTUB1, OTUB2 and OTUD5. Undergoes 'Lys-63'-linked deubiquitination by MYSM1 to terminate the pattern-recognition receptors/PRRs pathways. Ubiquitinated at Lys-328 by the SCF(FBXL2) complex, leading to its degradation by the proteasome. Post-translationally, undergoes 'Lys-48'-linked polyubiquitination, leading to its proteasomal degradation in response to signaling by TNFSF13B, TLR4 or through CD40. 'Lys-48'-linked polyubiquitinated form is deubiquitinated by OTUD7B, preventing TRAF3 proteolysis and over-activation of non-canonical NF-kappa-B. Undergoes 'Lys-63'-linked ubiquitination during early stages of virus infection, and 'Lys-48'-linked ubiquitination during later stages. Undergoes both 'Lys-48'-linked and 'Lys-63'-linked ubiquitination in response to TLR3 and TLR4 signaling. 'Lys-63'-linked ubiquitination can be mediated by TRIM35. Deubiquitinated by OTUB1, OTUB2 and OTUD5. Undergoes 'Lys-63'-linked deubiquitination by MYSM1 to terminate the pattern-recognition receptors/PRRs pathways. Also undergoes 'Lys-29'-linked ubiquitination on Cys-55 and Cys-123 by NEDD4L; leading to increased 'Lys-48'- and 'Lys-63'-linked ubiquitination as well as increased binding to TBK1. TLR4 signals emanating from bacteria containing vesicles trigger 'Lys-33'-linked polyubiquitination that promotes the assembly of the exocyst complex thereby connecting innate immune signaling to the cellular trafficking apparatus. Deubiquitinated by USP25 during viral infection, leading to TRAF3 stabilization and type I interferon production. 'Lys-63'-linked ubiquitination by FBXO11 in a NEDD8-dependent manner promotes the amplification of IFN-I signaling. In terms of tissue distribution, detected in bone marrow macrophages and spleen B-cells (at protein level). In adult, highest in brain. Also found in kidney, heart, thymus, spleen, lung, muscle, testis and ovary. Not found in liver.

It localises to the cytoplasm. The protein localises to the endosome. Its subcellular location is the mitochondrion. It catalyses the reaction S-ubiquitinyl-[E2 ubiquitin-conjugating enzyme]-L-cysteine + [acceptor protein]-L-lysine = [E2 ubiquitin-conjugating enzyme]-L-cysteine + N(6)-ubiquitinyl-[acceptor protein]-L-lysine.. Cytoplasmic E3 ubiquitin ligase that regulates various signaling pathways, such as the NF-kappa-B, mitogen-activated protein kinase (MAPK) and interferon regulatory factor (IRF) pathways, and thus controls a lot of biological processes in both immune and non-immune cell types. In TLR and RLR signaling pathways, acts as an E3 ubiquitin ligase promoting the synthesis of 'Lys-63'-linked polyubiquitin chains on several substrates such as ASC that lead to the activation of the type I interferon response or the inflammasome. Following the activation of certain TLRs such as TLR4, acts as a negative NF-kappa-B regulator, possibly to avoid unregulated inflammatory response, and its degradation via 'Lys-48'-linked polyubiquitination is required for MAPK activation and production of inflammatory cytokines. Alternatively, when TLR4 orchestrates bacterial expulsion, TRAF3 undergoes 'Lys-33'-linked polyubiquitination and subsequently binds to RALGDS, mobilizing the exocyst complex to rapidly expel intracellular bacteria back for clearance. Also acts as a constitutive negative regulator of the alternative NF-kappa-B pathway, which controls B-cell survival and lymphoid organ development. Required for normal antibody isotype switching from IgM to IgG. Plays a role T-cell dependent immune responses. Down-regulates proteolytic processing of NFKB2, and thereby inhibits non-canonical activation of NF-kappa-B. Promotes ubiquitination and proteasomal degradation of MAP3K14. The polypeptide is TNF receptor-associated factor 3 (Mus musculus (Mouse)).